The sequence spans 1780 residues: MASRMSMYSMASEALGGGPQAAQVSTTTLLNAIHNIYLSSQPYQLDASTSLVVNTWLTAAQAGATVDATLAARAWEHARRRAEDGCVILGSLHQSTPSLLVPFLNTFPFAIPASIYKSLEALQPFLRCVTPYNASAPRQIALGVTLTLSLGGNVTGASLALSQGGIDTENGLLNIPAEAGYRAFDVFYYLLTSASTPAEREFLGLKSPSAYALLARSGTYEPPSYLITADDGAAADDFRQALKEIGIKGSAHRNFISTLAGLLKLGNTLDYDADSDDFEEICEDVSGLLGMEPEVLMQQLSTEDRRTLVGGLYEALVDWVISKANSAIAAQMLRIRDGDESIDGRGVRTPTSNEDGDTVSITVVEVPEPSIGRALAMRTIFDDTIGINAEMIEDGVEVHPVGSSVVREMQQAVSDVAPDLGIMTGPQGRDRQHDLEKREVILEKVAYGSEDDSFVKKLLFPVEGEGVSLGRAGRFDLPALLSASRTWFHLSLHPTDDSPANLATLPAITSAWSAGTVSRQLRSWRLPEWANRRNRNLDYTADFDVDEFVGRYGALGCKDGKDGIETWMLERGWSNGEVFIGKERIWVREGPWWEAETMLDIKPAHSLQSMGQNPFTSGFDTSYSANPPNGSGFFPPPAMDNSLNGSNDQLMHTRNFSQGNMSQVTLNQHQNLNPQSAPSIAPSAMRNVQTTGDYGLGTKGDTYKGQVYYNEDGEFTGILDGELAKNKKIESKPLPFGRRAWIAFVWALTFWIPSPLLKFIGRMRRPDVRMAWREKFVLFFLIILINGMVVFWIIGFGKLLCPNANKAWNVKEVATHAEDEKSFWVAIHGKVYDITDFWQQQHSDTSIKVTKQNMLPLSGMVMDNYFMPPLNRACRGLGIKETTQLTFNDTITNPLAQHTSGFYTRDRTSALHDPDWYWKKFQPKIKEYYHGNLVWKKSKVKNEGENEQHMWATYGNEVYDLTDYLHTLDVNDNFDSYKFLNEDMVDLWKNSPGTNIKKDLDLLIANAKNETVSANLKNSWQCIQNIAYKGILDFRDSARCQVNNYLLLAFAIIICIVTAVKFLAALQFGSKRRPSPQDKFVICQVPVYTEGEDSLRKALDSLTALQYDNKRKLICVICDGVVVGQGNDRPTPKIVLDILGVDPKVDPPALPFKSVGSSSEQLNYGKVYSGLYEFEGNVVPYIVVVKVGKESEQSKAKPGNRGKRDSQILLMSFLNRVHHRAPMSPLELEMFHQVNNIIGVDPELYEYLLMVDADTCVEEDSLNRLVAACAHNAKIAGICGETALENDEKTWWTMIQVYEYFISHHLAKAFESLFGSVTCLPGCFTMYRLRSVDKGKPLIISDAVIKDYSVCDVDTLHKKNLLSLGEDRYLTTLMTKYFPEMSYKFIPDAQCKTAAPESWSVLLSQRRRWINSTIHNLVELMQLKELCGFCCFSMRFVVFIDLCGTIILPSTCVYIGYLIYILATGSGPIPYISLAMIGAVYGLQALIFILKRQWQHIGWMIIYILAFPIYSFILPLYSFWNQDNFSWGNTRIVIGEKGNKQVVAVDDEGFDPRSIPLQRWDDYALANNLPGRRGGYQEKTDYSYGDNYELDEIKSVYSAGPQGSVLTGMPGRNTYMPPQSPAFNNGRASTMGFQDSPMQHRQSMMSMGTGVHDMRSQSPYQDYPGQHPSVSNLRGQANLSPATGGGHSRSGTALGFSSGARSPMPDAMRSQSSFDFQHGHAGPNDMAIVESIRSVLCEVDLDTVTKKQVRALVEQRLQTELVGERRTFMDRQIDHELENM.

N-linked (GlcNAc...) asparagine glycosylation is found at Asn133, Asn153, Asn629, Asn644, Asn655, and Asn660. A run of 2 helical transmembrane segments spans residues 740 to 760 and 776 to 796; these read AWIA…LKFI and FVLF…IIGF. Residues 805 to 866 form the Cytochrome b5 heme-binding domain; sequence NKAWNVKEVA…LSGMVMDNYF (62 aa). 2 N-linked (GlcNAc...) asparagine glycosylation sites follow: Asn888 and Asn1009. A helical transmembrane segment spans residues 1046-1066; sequence LLLAFAIIICIVTAVKFLAAL. Residue Asn1411 is glycosylated (N-linked (GlcNAc...) asparagine). 3 helical membrane-spanning segments follow: residues 1442-1462, 1469-1489, and 1497-1517; these read LCGT…IYIL, IPYI…LIFI, and IGWM…LPLY. A glycan (N-linked (GlcNAc...) asparagine) is linked at Asn1524. The interval 1649–1691 is disordered; the sequence is TGVHDMRSQSPYQDYPGQHPSVSNLRGQANLSPATGGGHSRSG. The span at 1668 to 1681 shows a compositional bias: polar residues; the sequence is PSVSNLRGQANLSP. The region spanning 1722-1778 is the DEK-C domain; that stretch reads GPNDMAIVESIRSVLCEVDLDTVTKKQVRALVEQRLQTELVGERRTFMDRQIDHELE.

This sequence belongs to the chitin synthase family. Class VII subfamily.

It is found in the cell membrane. The enzyme catalyses [(1-&gt;4)-N-acetyl-beta-D-glucosaminyl](n) + UDP-N-acetyl-alpha-D-glucosamine = [(1-&gt;4)-N-acetyl-beta-D-glucosaminyl](n+1) + UDP + H(+). In terms of biological role, polymerizes chitin, a structural polymer of the cell wall and septum, by transferring the sugar moiety of UDP-GlcNAc to the non-reducing end of the growing chitin polymer. ChsV and chsVb do perform additive, but not redundant, functions in septum formation. Functions not only in the maintenance of cell wall integrity under different osmotic conditions but also in polarized cell wall synthesis. Plays an important role in the complex infection process of this fungus. In Fusarium oxysporum f. sp. lycopersici (strain 4287 / CBS 123668 / FGSC 9935 / NRRL 34936) (Fusarium vascular wilt of tomato), this protein is Chitin synthase Vb.